The following is a 705-amino-acid chain: Frizzled-4 (705 aa).

Positions 1–22 (MKPTCILCLLVVILLHPRISKS) are cleaved as a signal peptide. A compositionally biased stretch (low complexity) spans 21–37 (KSSTSGNPSASSSSSSP). The segment at 21–40 (KSSTSGNPSASSSSSSPPEI) is disordered. Residues 23 to 233 (STSGNPSASS…FTPAEKHLAE (211 aa)) are Extracellular-facing. The FZ domain maps to 41 to 163 (PAFRQCETIR…NNHETMCMEG (123 aa)). Disulfide bonds link C46–C107, C54–C100, C91–C130, C119–C160, and C123–C147. N60 is a glycosylation site (N-linked (GlcNAc...) asparagine). The helical transmembrane segment at 234–254 (IWVSTWAYAALGLALVATVCL) threads the bilayer. Over 255-270 (LASDGSRLASAKWSRL) the chain is Cytoplasmic. A helical transmembrane segment spans residues 271 to 291 (LSPLIWCHNMVTLGWAVRFMV). The Extracellular segment spans residues 292–322 (GRTGTACGTDPQAPNESLLTVDGLSNASCAS). N-linked (GlcNAc...) asparagine glycans are attached at residues N306 and N317. The helical transmembrane segment at 323–343 (VFLMRYYFGMAACAWWAVLCL) threads the bilayer. Residues 344–386 (GWHRDIRRHSPDSKGHVVIPSNFGGSPAKRNSAKTAQQDLTQN) lie on the Cytoplasmic side of the membrane. The chain crosses the membrane as a helical span at residues 387–407 (NFVCFVAWGLPAFQTSAVIVA). At 408 to 430 (RFVDADELLGACFVGNQSDKALQ) the chain is on the extracellular side. N423 is a glycosylation site (N-linked (GlcNAc...) asparagine). A helical membrane pass occupies residues 431–451 (ILVATPVFCYWIFGSMNLISG). The Cytoplasmic segment spans residues 452-483 (YLVHCRTKEILRNSNALSVQQQLQQLSAHSSS). The chain crosses the membrane as a helical span at residues 484 to 504 (GIGIFLFIYGLACAMLLLAVI). Residues 505 to 529 (YEFANIDVWLGSGDTNTPLWPFLLR) lie on the Extracellular side of the membrane. The chain crosses the membrane as a helical span at residues 530 to 550 (AFMELMLGICCFAWVLGPSIS). At 551–705 (TLYKRQVSNG…LQQYGNETLL (155 aa)) the chain is on the cytoplasmic side. The interval 635 to 681 (RSVHHQQRHSPHHHHHQQQQHHQFHPHHNHQHHSTSSHRLYYPPGSY) is disordered. Basic residues predominate over residues 636-670 (SVHHQQRHSPHHHHHQQQQHHQFHPHHNHQHHSTS). The PDZ-binding signature appears at 703–705 (TLL).

Belongs to the G-protein coupled receptor Fz/Smo family.

Its subcellular location is the membrane. Receptor for Wnt proteins. Most of frizzled receptors are coupled to the beta-catenin canonical signaling pathway, which leads to the activation of disheveled proteins, inhibition of GSK-3 kinase, nuclear accumulation of beta-catenin and activation of Wnt target genes. A second signaling pathway involving PKC and calcium fluxes has been seen for some family members, but it is not yet clear if it represents a distinct pathway or if it can be integrated in the canonical pathway, as PKC seems to be required for Wnt-mediated inactivation of GSK-3 kinase. Both pathways seem to involve interactions with G-proteins. May be involved in transduction and intercellular transmission of polarity information during tissue morphogenesis and/or in differentiated tissues. Required to coordinate the cytoskeletons of epidermal cells to produce a parallel array of cuticular hairs and bristles. The polypeptide is Frizzled-4 (fz4) (Drosophila melanogaster (Fruit fly)).